Consider the following 469-residue polypeptide: MAQGNNYGQTSNGVADESPNMLVYRKMEDVIARMQDEKNGIPIRTVKSFLSKIPSVFSGSDIVQWLIKNLTIEDPVEALHLGTLMAAHGYFFPISDHVLTLKDDGTFYRFQTPYFWPSNCWEPENTDYAVYLCKRTMQNKARLELADYEAESLARLQRAFARKWEFIFMQAEAQAKVDKKRDKIERKILDSQERAFWDVHRPVPGCVNTTEVDIKKSSRMRNPHKTRKSVYGLQNDIRSHSPTHTPTPETKPPTEDELQQQIKYWQIQLDRHRLKMSKVADSLLSYTEQYVEYDPFLAPPDPSNPWLSDDTTFWELEASKEPSQQRVKRWGFGMDEALKDPVGREQFLKFLESEFSSENLRFWLAVEDLKKRPIREVPSRVQEIWQEFLAPGAPSAINLDSKSYDKTTQNVKEPGRYTFEDAQEHIYKLMKSDSYPRFIRSSAYQELLQAKKKGKSLTSKRLTSLVQSY.

Positions 37–112 (EKNGIPIRTV…DDGTFYRFQT (76 aa)) constitute a DEP domain. 2 positions are modified to phosphoserine: serine 229 and serine 241. The interval 235–256 (NDIRSHSPTHTPTPETKPPTED) is disordered. Threonine 243 carries the post-translational modification Phosphothreonine. The region spanning 255-316 (EDELQQQIKY…LSDDTTFWEL (62 aa)) is the G protein gamma domain. The RGS domain maps to 333–448 (GMDEALKDPV…IRSSAYQELL (116 aa)). Serine 434 carries the post-translational modification Phosphoserine.

Interacts with GNB5, forming the RGS7-GNB5 complex. Interacts with GPR158; promotes the GTPase activator activity of the RGS7-GNB5 complex in absence of glycine, in contrast GTPase activator activity of the RGS7-GNB5 complex is inhibited in presence of glycine. Interacts with GPR179. Interacts with PKD1; this prevents rapid proteasomal degradation. Interacts with RGS7BP, leading to regulate the subcellular location of the heterodimer formed with GNB5. Interacts (phosphorylated form) with 14-3-3 protein YWHAQ. Interacts with SNAPIN. Interacts with GNAI1. Interacts with GNAO1, GNAI3 and GNAZ. In terms of processing, palmitoylated. Post-translationally, ubiquitinated, leading to rapid proteasomal degradation. Phosphorylation and subsequent interaction with 14-3-3 proteins inhibits GAP activity. In terms of tissue distribution, detected in retina (at protein level).

It localises to the cytoplasm. Its subcellular location is the cytosol. The protein resides in the cell membrane. The protein localises to the membrane. In terms of biological role, GTPase activator component of the RGS7-GNB5 complex that regulates G protein-coupled receptor signaling cascades. The RGS7-GNB5 complex acts as an inhibitor signal transduction by promoting the GTPase activity of G protein alpha subunits, such as GNAO1, thereby driving them into their inactive GDP-bound form. May play a role in synaptic vesicle exocytosis. Glycine-dependent regulation of the RGS7-GNB5 complex by GPR158 affects mood and cognition via its ability to regulate neuronal excitability in L2/L3 pyramidal neurons of the prefrontal cortex. Modulates the activity of potassium channels that are activated by GNAO1 in response to muscarinic acetylcholine receptor M2/CHRM2 signaling. The polypeptide is Regulator of G-protein signaling 7 (RGS7) (Bos taurus (Bovine)).